The primary structure comprises 502 residues: Lanosterol 14-alpha demethylase (502 aa).

A helical transmembrane segment spans residues G22–F42. C448 lines the heme pocket.

Belongs to the cytochrome P450 family. Heme serves as cofactor. In terms of processing, ubiquitinated by MARCHF6, leading to proteasomal degradation.

It is found in the endoplasmic reticulum membrane. It localises to the microsome membrane. The catalysed reaction is a 14alpha-methyl steroid + 3 reduced [NADPH--hemoprotein reductase] + 3 O2 = a Delta(14) steroid + formate + 3 oxidized [NADPH--hemoprotein reductase] + 4 H2O + 4 H(+). The enzyme catalyses lanosterol + 3 reduced [NADPH--hemoprotein reductase] + 3 O2 = 4,4-dimethyl-5alpha-cholesta-8,14,24-trien-3beta-ol + formate + 3 oxidized [NADPH--hemoprotein reductase] + 4 H2O + 4 H(+). It catalyses the reaction 24,25-dihydrolanosterol + 3 reduced [NADPH--hemoprotein reductase] + 3 O2 = 4,4-dimethyl-8,14-cholestadien-3beta-ol + formate + 3 oxidized [NADPH--hemoprotein reductase] + 4 H2O + 4 H(+). It carries out the reaction a 14alpha-methyl steroid + reduced [NADPH--hemoprotein reductase] + O2 = a 14alpha-hydroxymethyl steroid + oxidized [NADPH--hemoprotein reductase] + H2O + H(+). The catalysed reaction is a 14alpha-hydroxymethyl steroid + reduced [NADPH--hemoprotein reductase] + O2 = a 14alpha-formyl steroid + oxidized [NADPH--hemoprotein reductase] + 2 H2O + H(+). The enzyme catalyses a 14alpha-formyl steroid + reduced [NADPH--hemoprotein reductase] + O2 = a Delta(14) steroid + formate + oxidized [NADPH--hemoprotein reductase] + H2O + 2 H(+). It catalyses the reaction lanosterol + reduced [NADPH--hemoprotein reductase] + O2 = 32-hydroxylanosterol + oxidized [NADPH--hemoprotein reductase] + H2O + H(+). It carries out the reaction 32-hydroxylanosterol + reduced [NADPH--hemoprotein reductase] + O2 = 32-oxolanosterol + oxidized [NADPH--hemoprotein reductase] + 2 H2O + H(+). The catalysed reaction is 32-oxolanosterol + reduced [NADPH--hemoprotein reductase] + O2 = 4,4-dimethyl-5alpha-cholesta-8,14,24-trien-3beta-ol + formate + oxidized [NADPH--hemoprotein reductase] + H2O + 2 H(+). The enzyme catalyses 24,25-dihydrolanosterol + reduced [NADPH--hemoprotein reductase] + O2 = 32-hydroxy-24,25-dihydrolanosterol + oxidized [NADPH--hemoprotein reductase] + H2O + H(+). It catalyses the reaction 32-hydroxy-24,25-dihydrolanosterol + reduced [NADPH--hemoprotein reductase] + O2 = 32-oxo-24,25-dihydrolanosterol + oxidized [NADPH--hemoprotein reductase] + 2 H2O + H(+). It carries out the reaction 32-oxo-24,25-dihydrolanosterol + reduced [NADPH--hemoprotein reductase] + O2 = 4,4-dimethyl-8,14-cholestadien-3beta-ol + formate + oxidized [NADPH--hemoprotein reductase] + H2O + 2 H(+). It participates in steroid biosynthesis; zymosterol biosynthesis; zymosterol from lanosterol: step 1/6. Its activity is regulated as follows. Inhibited by azalanstat. Inhibited by azole antifungal agents ketoconazole, itraconazole and fluconazole. Its function is as follows. Sterol 14alpha-demethylase that plays a critical role in the cholesterol biosynthesis pathway, being cholesterol the major sterol component in mammalian membranes as well as a precursor for bile acid and steroid hormone synthesis. Cytochrome P450 monooxygenase that catalyzes the three-step oxidative removal of the 14alpha-methyl group (C-32) of sterols such as lanosterol (lanosta-8,24-dien-3beta-ol) and 24,25-dihydrolanosterol (DHL) in the form of formate, and converts the sterols to 4,4-dimethyl-5alpha-cholesta-8,14,24-trien-3beta-ol and 4,4-dimethyl-8,14-cholestadien-3beta-ol, respectively, which are intermediates of cholesterol biosynthesis. Can also demethylate substrates not intrinsic to mammals, such as eburicol (24-methylene-24,25-dihydrolanosterol), but at a lower rate than DHL. In Bos taurus (Bovine), this protein is Lanosterol 14-alpha demethylase.